Here is a 140-residue protein sequence, read N- to C-terminus: 3-hydroxyacyl-[acyl-carrier-protein] dehydratase FabZ (140 aa).

Residue His-48 is part of the active site.

This sequence belongs to the thioester dehydratase family. FabZ subfamily.

Its subcellular location is the cytoplasm. The catalysed reaction is a (3R)-hydroxyacyl-[ACP] = a (2E)-enoyl-[ACP] + H2O. Involved in unsaturated fatty acids biosynthesis. Catalyzes the dehydration of short chain beta-hydroxyacyl-ACPs and long chain saturated and unsaturated beta-hydroxyacyl-ACPs. In Oceanobacillus iheyensis (strain DSM 14371 / CIP 107618 / JCM 11309 / KCTC 3954 / HTE831), this protein is 3-hydroxyacyl-[acyl-carrier-protein] dehydratase FabZ.